We begin with the raw amino-acid sequence, 281 residues long: 2-dehydro-3-deoxyphosphooctonate aldolase (281 aa).

It belongs to the KdsA family.

The protein localises to the cytoplasm. The enzyme catalyses D-arabinose 5-phosphate + phosphoenolpyruvate + H2O = 3-deoxy-alpha-D-manno-2-octulosonate-8-phosphate + phosphate. It functions in the pathway carbohydrate biosynthesis; 3-deoxy-D-manno-octulosonate biosynthesis; 3-deoxy-D-manno-octulosonate from D-ribulose 5-phosphate: step 2/3. It participates in bacterial outer membrane biogenesis; lipopolysaccharide biosynthesis. The polypeptide is 2-dehydro-3-deoxyphosphooctonate aldolase (Pseudomonas fluorescens (strain SBW25)).